The following is a 255-amino-acid chain: Triosephosphate isomerase (255 aa).

Residue 9 to 11 (NWK) participates in substrate binding. The active-site Electrophile is the His-95. Glu-167 acts as the Proton acceptor in catalysis. Residues Gly-173, Ser-212, and 233 to 234 (GG) each bind substrate.

The protein belongs to the triosephosphate isomerase family. Homodimer.

It is found in the cytoplasm. The enzyme catalyses D-glyceraldehyde 3-phosphate = dihydroxyacetone phosphate. It participates in carbohydrate biosynthesis; gluconeogenesis. Its pathway is carbohydrate degradation; glycolysis; D-glyceraldehyde 3-phosphate from glycerone phosphate: step 1/1. Involved in the gluconeogenesis. Catalyzes stereospecifically the conversion of dihydroxyacetone phosphate (DHAP) to D-glyceraldehyde-3-phosphate (G3P). This Sodalis glossinidius (strain morsitans) protein is Triosephosphate isomerase.